Consider the following 260-residue polypeptide: Ribonuclease HII (260 aa).

One can recognise an RNase H type-2 domain in the interval 73–260 (LHIAGIDEAG…APVQQQLDIV (188 aa)). A divalent metal cation-binding residues include Asp-79, Glu-80, and Asp-171.

This sequence belongs to the RNase HII family. Requires Mn(2+) as cofactor. Mg(2+) serves as cofactor.

The protein localises to the cytoplasm. The catalysed reaction is Endonucleolytic cleavage to 5'-phosphomonoester.. Endonuclease that specifically degrades the RNA of RNA-DNA hybrids. This chain is Ribonuclease HII, found in Desulfitobacterium hafniense (strain Y51).